A 316-amino-acid polypeptide reads, in one-letter code: Porphobilinogen deaminase (316 aa).

Position 242 is an S-(dipyrrolylmethanemethyl)cysteine (Cys242).

This sequence belongs to the HMBS family. In terms of assembly, monomer. Requires dipyrromethane as cofactor.

The enzyme catalyses 4 porphobilinogen + H2O = hydroxymethylbilane + 4 NH4(+). The protein operates within porphyrin-containing compound metabolism; protoporphyrin-IX biosynthesis; coproporphyrinogen-III from 5-aminolevulinate: step 2/4. In terms of biological role, tetrapolymerization of the monopyrrole PBG into the hydroxymethylbilane pre-uroporphyrinogen in several discrete steps. In Thioalkalivibrio sulfidiphilus (strain HL-EbGR7), this protein is Porphobilinogen deaminase.